A 563-amino-acid polypeptide reads, in one-letter code: Coiled-coil domain-containing protein 63 (563 aa).

The interval 1–29 (MSVLKKNRRKDSDTPQEPSEKAKEQQAEA) is disordered. A compositionally biased stretch (basic and acidic residues) spans 10-29 (KDSDTPQEPSEKAKEQQAEA). Coiled coils occupy residues 18–201 (PSEK…QLQH), 233–291 (AMKD…AKKH), and 341–422 (TELN…KKIN).

Functionally, plays a role in spermiogenesis. Involved in the elongation of flagella and the formation of sperm heads. In Homo sapiens (Human), this protein is Coiled-coil domain-containing protein 63.